The chain runs to 190 residues: Riboflavin transporter FmnP (190 aa).

Over 1 to 5 the chain is Extracellular; sequence MKVKK. A helical membrane pass occupies residues 6–26; that stretch reads LVVVSMLSSIAFVLMLLNFPF. The Cytoplasmic segment spans residues 27–39; it reads PGLPDYLKIDFSD. Residues 40–60 traverse the membrane as a helical segment; the sequence is VPAIIAILIYGPLAGIAVEAI. The Extracellular portion of the chain corresponds to 61 to 76; it reads KNVLQYIIQGSMAGVP. Residues 77–97 traverse the membrane as a helical segment; it reads VGQVANFIAGTLFILPTAFLF. Residues 98–109 are Cytoplasmic-facing; it reads KKLNSAKGLAVS. The chain crosses the membrane as a helical span at residues 110-130; the sequence is LLLGTAAMTILMSILNYVLIL. Residues 131–154 are Extracellular-facing; the sequence is PAYTWFLHSPALSDSALKTAVVAG. Residues 155–175 traverse the membrane as a helical segment; it reads ILPFNMIKGIVITVVFSLIFI. Residues 176-190 lie on the Cytoplasmic side of the membrane; sequence KLKPWIEQQRSAHIH.

It belongs to the prokaryotic riboflavin transporter (P-RFT) (TC 2.A.87) family. Forms a stable energy-coupling factor (ECF) transporter complex composed of a membrane-embedded substrate-binding protein (S component), 2 ATP-binding proteins (A component) and 2 transmembrane proteins (T component). May be able to interact with more than 1 S component at a time.

It is found in the cell membrane. Inhibited by excess of riboflavin or FMN. Also inhibited by protonophores such as CCCP and FCCP or in the absence of glucose. Its function is as follows. Mediates uptake of riboflavin and roseoflavin, a toxic riboflavin analog; may also transport FMN. Probably a riboflavin-binding protein that interacts with the energy-coupling factor (ECF) ABC-transporter complex. Unlike classic ABC transporters this ECF transporter provides the energy necessary to transport a number of different substrates. The substrates themselves are bound by transmembrane, not extracytoplasmic soluble proteins. This Bacillus subtilis (strain 168) protein is Riboflavin transporter FmnP (fmnP).